Here is a 377-residue protein sequence, read N- to C-terminus: MNHSERFVFIAEWFDPNASLFRRYELLFYPGDGSVEMHDVKNHRTFLKRTKYEDLHLEDLFIGNKVNIFSRQLVLLDYGDQYTARQLGSKKEKTLALIKPDAVSKAGEIIEIINKAGFTLTKLKMMTLSRKEATDFHIDHQSRPFLNELIQFITSGPIIAMEILRDDAVCEWKRLLGPANSGLARTDAPESIRALFGTDGIKNAAHGPDSFACAAREMELFFPSSGVCGPANTAKFTNCTTCCIVKPHAVSEGLLGKILMTIRDAGFEISAMQMFNMDRINVEEFYEVYKGVVSEYNEMVTEMYSGPCVAMEIQQTNPTMTFREFCGPADPEIARHLRPGTLRAIFGKTKIQNAVHCTDLPEDGLLEVQYFFKILDN.

Residues 3–91 (HSERFVFIAE…YTARQLGSKK (89 aa)) enclose the DM10 domain.

It belongs to the NDK family. Component of sperm flagellar doublet microtubules. Component of the gamma-tubulin ring complex. As to expression, expressed in trachea multiciliated cells.

Its subcellular location is the cytoplasm. The protein localises to the cytoskeleton. The protein resides in the microtubule organizing center. It localises to the centrosome. It is found in the nucleus. Its subcellular location is the spindle. The protein localises to the cilium axoneme. The protein resides in the flagellum axoneme. It localises to the cell projection. It is found in the cilium. Its function is as follows. Possesses an intrinsic kinase activity. Displays 3'-5' exonuclease activity with a preference for single-stranded DNA. Does not seem to have nucleoside diphosphate kinase activity. Functional component of the gamma-tubulin ring complex, implicated in the regulation of the microtubule-nucleating activity of the gamma-tubulin ring complex in centrosomes, in a kinase activity-dependent manner. Part of the dynein-decorated doublet microtubules (DMTs) in cilia axoneme, which is required for motile cilia beating. This is Nucleoside diphosphate kinase homolog 7 (NME7) from Bos taurus (Bovine).